Here is a 38-residue protein sequence, read N- to C-terminus: Large ribosomal subunit protein bL36 (38 aa).

Belongs to the bacterial ribosomal protein bL36 family.

The polypeptide is Large ribosomal subunit protein bL36 (Methylacidiphilum infernorum (isolate V4) (Methylokorus infernorum (strain V4))).